A 302-amino-acid polypeptide reads, in one-letter code: Sulfate adenylyltransferase subunit 2 (302 aa).

Belongs to the PAPS reductase family. CysD subfamily. Heterodimer composed of CysD, the smaller subunit, and CysN.

It carries out the reaction sulfate + ATP + H(+) = adenosine 5'-phosphosulfate + diphosphate. It participates in sulfur metabolism; hydrogen sulfide biosynthesis; sulfite from sulfate: step 1/3. Its function is as follows. With CysN forms the ATP sulfurylase (ATPS) that catalyzes the adenylation of sulfate producing adenosine 5'-phosphosulfate (APS) and diphosphate, the first enzymatic step in sulfur assimilation pathway. APS synthesis involves the formation of a high-energy phosphoric-sulfuric acid anhydride bond driven by GTP hydrolysis by CysN coupled to ATP hydrolysis by CysD. In Serratia proteamaculans (strain 568), this protein is Sulfate adenylyltransferase subunit 2.